Here is a 492-residue protein sequence, read N- to C-terminus: FAD-containing monooxygenase EthA (492 aa).

Residues serine 15, glutamate 36, threonine 44 to leucine 47, aspartate 56, and valine 104 contribute to the FAD site. Arginine 54–aspartate 56 provides a ligand contact to NADP(+). Residues serine 183 to threonine 189 and arginine 207 to serine 208 contribute to the NADP(+) site.

This sequence belongs to the FAD-binding monooxygenase family. FAD serves as cofactor.

It localises to the cell membrane. It catalyses the reaction ethionamide + NADPH + O2 + H(+) = ethionamide S-oxide + NADP(+) + H2O. In terms of biological role, monooxygenase able to convert a wide range of ketones to the corresponding esters or lactones via a Baeyer-Villiger oxidation reaction. Can act on long-chain aliphatic ketones (2-hexanone to 2-dodecanone) and on aromatic ketones (phenylacetone and benzylacetone). Is also able to catalyze enantioselective sulfoxidation of methyl-p-tolylsulfide. In vivo, likely functions as a BVMO, but the exact nature of the physiological substrate(s) remains to be established. Is responsible for the activation of several thiocarbamide-containing pro-drugs, such as ethionamide (ETH), isoxyl (ISO) and thiacetazone (TAC), into reactive species. The sequence is that of FAD-containing monooxygenase EthA (ethA) from Mycolicibacterium smegmatis (strain ATCC 700084 / mc(2)155) (Mycobacterium smegmatis).